The following is a 113-amino-acid chain: Ribonuclease P protein component (113 aa).

The protein belongs to the RnpA family. Consists of a catalytic RNA component (M1 or rnpB) and a protein subunit.

It catalyses the reaction Endonucleolytic cleavage of RNA, removing 5'-extranucleotides from tRNA precursor.. In terms of biological role, RNaseP catalyzes the removal of the 5'-leader sequence from pre-tRNA to produce the mature 5'-terminus. It can also cleave other RNA substrates such as 4.5S RNA. The protein component plays an auxiliary but essential role in vivo by binding to the 5'-leader sequence and broadening the substrate specificity of the ribozyme. This Vesicomyosocius okutanii subsp. Calyptogena okutanii (strain HA) protein is Ribonuclease P protein component.